We begin with the raw amino-acid sequence, 341 residues long: Solute carrier family 25 member 43 (341 aa).

3 Solcar repeats span residues 11–101 (TGSQ…MDDL), 105–185 (SQWS…LLVY), and 200–298 (SHLQ…LYQN). A run of 6 helical transmembrane segments spans residues 16–36 (LLCAGLAGAFSLSLTAPLELA), 68–88 (LWKGNGVACLRLFPCSMVQLA), 110–130 (IVTGSLAGMVSTIVTYPTDLI), 166–186 (GVSLTVLGAVPFSAGSLLVYM), 205–225 (FANVCVAAAVSQTLSFPFDTV), and 262–282 (VLGLWNGLTANLLKVVPYFGV).

This sequence belongs to the mitochondrial carrier (TC 2.A.29) family.

The protein localises to the mitochondrion inner membrane. The protein is Solute carrier family 25 member 43 (Slc25a43) of Mus musculus (Mouse).